Here is a 271-residue protein sequence, read N- to C-terminus: Putative hydro-lyase jk0403 (271 aa).

This sequence belongs to the D-glutamate cyclase family.

The chain is Putative hydro-lyase jk0403 from Corynebacterium jeikeium (strain K411).